The primary structure comprises 240 residues: Methylthioribulose-1-phosphate dehydratase (240 aa).

Cysteine 100 contributes to the substrate binding site. Zn(2+) is bound by residues histidine 117 and histidine 119. Glutamate 146 (proton donor/acceptor) is an active-site residue. Histidine 202 provides a ligand contact to Zn(2+).

This sequence belongs to the aldolase class II family. MtnB subfamily. Requires Zn(2+) as cofactor.

It is found in the cytoplasm. The enzyme catalyses 5-(methylsulfanyl)-D-ribulose 1-phosphate = 5-methylsulfanyl-2,3-dioxopentyl phosphate + H2O. It participates in amino-acid biosynthesis; L-methionine biosynthesis via salvage pathway; L-methionine from S-methyl-5-thio-alpha-D-ribose 1-phosphate: step 2/6. In terms of biological role, catalyzes the dehydration of methylthioribulose-1-phosphate (MTRu-1-P) into 2,3-diketo-5-methylthiopentyl-1-phosphate (DK-MTP-1-P). This is Methylthioribulose-1-phosphate dehydratase from Emericella nidulans (strain FGSC A4 / ATCC 38163 / CBS 112.46 / NRRL 194 / M139) (Aspergillus nidulans).